The primary structure comprises 444 residues: Methylenetetrahydrofolate--tRNA-(uracil-5-)-methyltransferase TrmFO (444 aa).

9–14 (GAGMAG) is an FAD binding site.

The protein belongs to the MnmG family. TrmFO subfamily. It depends on FAD as a cofactor.

The protein resides in the cytoplasm. It catalyses the reaction uridine(54) in tRNA + (6R)-5,10-methylene-5,6,7,8-tetrahydrofolate + NADH + H(+) = 5-methyluridine(54) in tRNA + (6S)-5,6,7,8-tetrahydrofolate + NAD(+). It carries out the reaction uridine(54) in tRNA + (6R)-5,10-methylene-5,6,7,8-tetrahydrofolate + NADPH + H(+) = 5-methyluridine(54) in tRNA + (6S)-5,6,7,8-tetrahydrofolate + NADP(+). Catalyzes the folate-dependent formation of 5-methyl-uridine at position 54 (M-5-U54) in all tRNAs. The chain is Methylenetetrahydrofolate--tRNA-(uracil-5-)-methyltransferase TrmFO from Cereibacter sphaeroides (strain KD131 / KCTC 12085) (Rhodobacter sphaeroides).